A 394-amino-acid polypeptide reads, in one-letter code: Putative 8-amino-7-oxononanoate synthase (394 aa).

Position 30 (arginine 30) interacts with substrate. 117-118 (GY) contacts pyridoxal 5'-phosphate. Histidine 142 is a substrate binding site. Pyridoxal 5'-phosphate contacts are provided by residues serine 190, 215–218 (DEAH), and 246–249 (TLSK). At lysine 249 the chain carries N6-(pyridoxal phosphate)lysine. A substrate-binding site is contributed by threonine 364.

Belongs to the class-II pyridoxal-phosphate-dependent aminotransferase family. BioF subfamily. As to quaternary structure, homodimer. Pyridoxal 5'-phosphate serves as cofactor.

The enzyme catalyses 6-carboxyhexanoyl-[ACP] + L-alanine + H(+) = (8S)-8-amino-7-oxononanoate + holo-[ACP] + CO2. Its pathway is cofactor biosynthesis; biotin biosynthesis. Catalyzes the decarboxylative condensation of pimeloyl-[acyl-carrier protein] and L-alanine to produce 8-amino-7-oxononanoate (AON), [acyl-carrier protein], and carbon dioxide. This Nostoc punctiforme (strain ATCC 29133 / PCC 73102) protein is Putative 8-amino-7-oxononanoate synthase (bioF).